A 198-amino-acid polypeptide reads, in one-letter code: Adenylyl-sulfate kinase (198 aa).

31 to 38 (GLSGAGKS) serves as a coordination point for ATP. The active-site Phosphoserine intermediate is the serine 105.

The protein belongs to the APS kinase family.

The catalysed reaction is adenosine 5'-phosphosulfate + ATP = 3'-phosphoadenylyl sulfate + ADP + H(+). Its pathway is sulfur metabolism; hydrogen sulfide biosynthesis; sulfite from sulfate: step 2/3. Functionally, catalyzes the synthesis of activated sulfate. The protein is Adenylyl-sulfate kinase of Shewanella amazonensis (strain ATCC BAA-1098 / SB2B).